Here is a 101-residue protein sequence, read N- to C-terminus: Protein S100-A7-like 2 (101 aa).

2 EF-hand domains span residues 13–48 and 50–85; these read IVAM…SGCE and SDMD…ITID. Residues D63, N65, D67, K69, and E74 each contribute to the Ca(2+) site. Zn(2+)-binding residues include H87 and H91.

It belongs to the S-100 family.

In Homo sapiens (Human), this protein is Protein S100-A7-like 2 (S100A7L2).